Reading from the N-terminus, the 280-residue chain is Ribosomal RNA-processing protein 7 homolog A (280 aa).

Basic residues predominate over residues 1-10 (MVSRRKKRKA). A disordered region spans residues 1-24 (MVSRRKKRKAGGHEESIPSPPGYS). The region spanning 59–159 (RTLFILNVPP…SGIHKWISDY (101 aa)) is the RRM domain. Position 99 is a phosphoserine (serine 99).

It belongs to the RRP7 family. Part of the small subunit (SSU) processome, composed of more than 70 proteins and the RNA chaperone small nucleolar RNA (snoRNA) U3. Interacts with NOL6; required for NOL6 localization to nucleolus.

Its subcellular location is the nucleus. It localises to the nucleolus. It is found in the cell projection. The protein localises to the cilium. The protein resides in the cytoplasm. Its subcellular location is the cytoskeleton. It localises to the microtubule organizing center. It is found in the centrosome. Nucleolar protein that is involved in ribosomal RNA (rRNA) processing. Also plays a role in primary cilia resorption, and cell cycle progression in neurogenesis and neocortex development. Part of the small subunit (SSU) processome, first precursor of the small eukaryotic ribosomal subunit. During the assembly of the SSU processome in the nucleolus, many ribosome biogenesis factors, an RNA chaperone and ribosomal proteins associate with the nascent pre-rRNA and work in concert to generate RNA folding, modifications, rearrangements and cleavage as well as targeted degradation of pre-ribosomal RNA by the RNA exosome. This chain is Ribosomal RNA-processing protein 7 homolog A (Rrp7a), found in Mus musculus (Mouse).